The primary structure comprises 116 residues: uncharacterized protein (116 aa).

Positions 6 to 83 (ATVHVGNLAP…RCIRVSPANF (78 aa)) constitute an RRM domain.

It is found in the cytoplasm. Its subcellular location is the nucleus. This is an uncharacterized protein from Schizosaccharomyces pombe (strain 972 / ATCC 24843) (Fission yeast).